The chain runs to 477 residues: Putative multidrug resistance protein MdtD (477 aa).

14 helical membrane passes run 13-33, 50-70, 73-93, 107-127, 139-159, 166-186, 196-216, 220-240, 268-288, 291-311, 326-348, 352-374, 394-414, and 432-452; these read LWIV…VNTA, SVIV…GWLA, VGVQ…SILC, VVQG…VMKI, FVTL…GFLV, WIFL…LLLM, FDIS…LALD, GMGL…AALA, LTAS…TPLF, VGMG…IIGS, GYRN…FPLV, GWIW…RFSA, LLSM…GILI, and AFIY…LAFA.

Belongs to the major facilitator superfamily. TCR/Tet family.

Its subcellular location is the cell inner membrane. In Serratia proteamaculans (strain 568), this protein is Putative multidrug resistance protein MdtD.